The sequence spans 376 residues: 1-acyl-sn-glycerol-3-phosphate acyltransferase 3 (376 aa).

2 helical membrane passes run 14-34 (VLFL…FIIV) and 49-69 (VAEL…CIKI). The HXXXXD motif motif lies at 92 to 97 (HRSDID). A run of 3 helical transmembrane segments spans residues 98–118 (WLIG…LAIM), 306–326 (LIVV…LLQW), and 335–355 (IILL…ILIQ).

The protein belongs to the 1-acyl-sn-glycerol-3-phosphate acyltransferase family. As to expression, predominantly expressed in pollen.

Its subcellular location is the membrane. It catalyses the reaction a 1-acyl-sn-glycero-3-phosphate + an acyl-CoA = a 1,2-diacyl-sn-glycero-3-phosphate + CoA. The protein operates within phospholipid metabolism; CDP-diacylglycerol biosynthesis; CDP-diacylglycerol from sn-glycerol 3-phosphate: step 2/3. Functionally, converts lysophosphatidic acid (LPA) into phosphatidic acid by incorporating acyl moiety at the 2 position. Has preference for C-18-CoA substrates compared to C-16-CoA substrates. This is 1-acyl-sn-glycerol-3-phosphate acyltransferase 3 (LPAT3) from Arabidopsis thaliana (Mouse-ear cress).